Reading from the N-terminus, the 178-residue chain is Large ribosomal subunit protein uL30 (178 aa).

This sequence belongs to the universal ribosomal protein uL30 family. As to quaternary structure, part of the 50S ribosomal subunit.

The chain is Large ribosomal subunit protein uL30 from Pyrobaculum aerophilum (strain ATCC 51768 / DSM 7523 / JCM 9630 / CIP 104966 / NBRC 100827 / IM2).